Here is a 127-residue protein sequence, read N- to C-terminus: Thioredoxin-3, mitochondrial (127 aa).

A mitochondrion-targeting transit peptide spans 1–21 (MLFYKPVMRMAVRPLKSIRFQ). A Thioredoxin domain is found at 22–127 (SSYTSITKLT…TALEKGIKDL (106 aa)). Residues cysteine 55 and cysteine 58 each act as nucleophile in the active site. A disulfide bridge links cysteine 55 with cysteine 58.

This sequence belongs to the thioredoxin family.

It localises to the mitochondrion. This chain is Thioredoxin-3, mitochondrial (TRX3), found in Saccharomyces cerevisiae (strain ATCC 204508 / S288c) (Baker's yeast).